The following is a 271-amino-acid chain: Glutamate racemase (271 aa).

Residues 10–11 (DS) and 42–43 (YG) each bind substrate. The active-site Proton donor/acceptor is the Cys-73. 74-75 (NT) serves as a coordination point for substrate. The active-site Proton donor/acceptor is the Cys-183. 184–185 (TH) is a substrate binding site.

The protein belongs to the aspartate/glutamate racemases family.

The enzyme catalyses L-glutamate = D-glutamate. The protein operates within cell wall biogenesis; peptidoglycan biosynthesis. Its function is as follows. Provides the (R)-glutamate required for cell wall biosynthesis. This chain is Glutamate racemase, found in Lactococcus lactis subsp. lactis (strain IL1403) (Streptococcus lactis).